A 235-amino-acid polypeptide reads, in one-letter code: Putative homeobox-leucine zipper protein ATHB-51 (235 aa).

Residues 74–133 (EMIKKKRLTSGQLASLERSFQEEIKLDSDRKVKLSRELGLQPRQIAVWFQNRRARWKAKQ) constitute a DNA-binding region (homeobox). Residues 134–162 (LEQLYDSLRQEYDVVSREKQMLHDEVKKL) form a leucine-zipper region.

This sequence belongs to the HD-ZIP homeobox family. Class I subfamily. As to expression, widely expressed.

Its subcellular location is the nucleus. Functionally, putative transcription factor. The sequence is that of Putative homeobox-leucine zipper protein ATHB-51 (ATHB-51) from Arabidopsis thaliana (Mouse-ear cress).